A 442-amino-acid polypeptide reads, in one-letter code: Trigger factor (442 aa).

In terms of domain architecture, PPIase FKBP-type spans 162 to 247 (GDRMTFDFEG…VKAIESRELP (86 aa)).

Belongs to the FKBP-type PPIase family. Tig subfamily.

It is found in the cytoplasm. The enzyme catalyses [protein]-peptidylproline (omega=180) = [protein]-peptidylproline (omega=0). Involved in protein export. Acts as a chaperone by maintaining the newly synthesized protein in an open conformation. Functions as a peptidyl-prolyl cis-trans isomerase. The chain is Trigger factor from Magnetococcus marinus (strain ATCC BAA-1437 / JCM 17883 / MC-1).